A 444-amino-acid polypeptide reads, in one-letter code: Glutamyl-tRNA reductase (444 aa).

Residues 41-44 (TCNR), Ser102, 107-109 (ERE), and Gln113 contribute to the substrate site. The active-site Nucleophile is the Cys42. 181–186 (GTGSYA) serves as a coordination point for NADP(+).

This sequence belongs to the glutamyl-tRNA reductase family. Homodimer.

It carries out the reaction (S)-4-amino-5-oxopentanoate + tRNA(Glu) + NADP(+) = L-glutamyl-tRNA(Glu) + NADPH + H(+). It participates in porphyrin-containing compound metabolism; protoporphyrin-IX biosynthesis; 5-aminolevulinate from L-glutamyl-tRNA(Glu): step 1/2. Catalyzes the NADPH-dependent reduction of glutamyl-tRNA(Glu) to glutamate 1-semialdehyde (GSA). The protein is Glutamyl-tRNA reductase of Cutibacterium acnes (strain DSM 16379 / KPA171202) (Propionibacterium acnes).